The following is a 576-amino-acid chain: Flagellin B (576 aa).

It belongs to the bacterial flagellin family. As to quaternary structure, heteromer of FlaA and FlaB. Interacts with FliW. Interacts with FliS.

The protein resides in the secreted. It is found in the bacterial flagellum. Functionally, flagellin is the subunit protein which polymerizes to form the filaments of bacterial flagella. This is Flagellin B (flaB) from Campylobacter jejuni subsp. jejuni serotype O:6 (strain 81116 / NCTC 11828).